A 485-amino-acid chain; its full sequence is Adenylate kinase 8 (485 aa).

Adenylate kinase stretches follow at residues 58–258 and 269–472; these read PRVF…TFVL and PRIL…YTVS. 67–72 contributes to the ATP binding site; the sequence is ASGKHT. An NMP 1 region spans residues 87-113; that stretch reads TPESVLSSDVSLLAKEAQSYRDKGQEV. AMP is bound by residues 140–143 and Q147; that span reads GFPK. Positions 177 to 206 are LID 1; that stretch reads GKRIDTANGEVYHTTFDWPSDPTVQRNLVE. R218 contacts AMP. 278–283 is an ATP binding site; that stretch reads GSGRSL. The interval 298-327 is NMP 2; sequence CCGQVLKEAVADQTKLGEVIQPYIENDQQV. Residues 325 to 327, 354 to 357, and Q361 contribute to the AMP site; these read QQV and GFPR. An LID 2 region spans residues 391–424; that stretch reads LCMTDPVSGERYHDIYKPAPSSEVHERLQQNPRH. R432 is an AMP binding site.

This sequence belongs to the adenylate kinase family.

It localises to the cytoplasm. The protein resides in the cytosol. It catalyses the reaction AMP + ATP = 2 ADP. The enzyme catalyses a 2'-deoxyribonucleoside 5'-diphosphate + ATP = a 2'-deoxyribonucleoside 5'-triphosphate + ADP. It carries out the reaction a ribonucleoside 5'-diphosphate + ATP = a ribonucleoside 5'-triphosphate + ADP. Functionally, nucleoside monophosphate (NMP) kinase that catalyzes the reversible transfer of the terminal phosphate group between nucleoside triphosphates and monophosphates. Has highest activity toward AMP, and weaker activity toward dAMP, CMP and dCMP. Also displays broad nucleoside diphosphate kinase activity. In Xenopus tropicalis (Western clawed frog), this protein is Adenylate kinase 8 (ak8).